A 180-amino-acid polypeptide reads, in one-letter code: ATP synthase subunit delta (180 aa).

The protein belongs to the ATPase delta chain family. In terms of assembly, F-type ATPases have 2 components, F(1) - the catalytic core - and F(0) - the membrane proton channel. F(1) has five subunits: alpha(3), beta(3), gamma(1), delta(1), epsilon(1). CF(0) has four main subunits: a(1), b(1), b'(1) and c(10-14). The alpha and beta chains form an alternating ring which encloses part of the gamma chain. F(1) is attached to F(0) by a central stalk formed by the gamma and epsilon chains, while a peripheral stalk is formed by the delta, b and b' chains.

It localises to the cellular thylakoid membrane. In terms of biological role, f(1)F(0) ATP synthase produces ATP from ADP in the presence of a proton or sodium gradient. F-type ATPases consist of two structural domains, F(1) containing the extramembraneous catalytic core and F(0) containing the membrane proton channel, linked together by a central stalk and a peripheral stalk. During catalysis, ATP synthesis in the catalytic domain of F(1) is coupled via a rotary mechanism of the central stalk subunits to proton translocation. Functionally, this protein is part of the stalk that links CF(0) to CF(1). It either transmits conformational changes from CF(0) to CF(1) or is implicated in proton conduction. The sequence is that of ATP synthase subunit delta from Prochlorococcus marinus subsp. pastoris (strain CCMP1986 / NIES-2087 / MED4).